The sequence spans 426 residues: MRVLLTSFAHHTHYYGLVPLAWALLAAGHEVRVASQPALTDTITGSGLAAVPVGTDHLIHEYRVRMAGEPRPNHPAIAFDEARPEPLDWDHALGIEAILAPYFHLLANNDSMVDDLVDFARSWQPDLVLWEPTTYAGAVAAQVTGAAHARVLWGPDVMGSARRKFVALRDRQPPEHREDPTAEWLTWTLDRYGASFEEELLTGQFTIDPTPPSLRLDTGLPTVGMRYVPYNGTSVVPDWLSEPPARPRVCLTLGVSAREVLGGDGVSQGDILEALADLDIELVATLDASQRAEIRNYPKHTRFTDFVPMHALLPSCSAIIHHGGAGTYATAVINAVPQVMLAELWDAPVKARAVAEQGAGFFLPPAELTPQAVRDAVVRILDDPSVATAAHRLREETFGDPTPAGIVPELERLAAQHRRPPADARH.

This sequence belongs to the glycosyltransferase 28 family. In terms of assembly, forms a complex with DesVIII.

The catalysed reaction is 10-deoxymethynolide + dTDP-alpha-D-desosamine = 10-deoxymethymycin + dTDP + H(+). The protein operates within antibiotic biosynthesis. In terms of biological role, involved in the biosynthesis of the macrolide antibiotics methymycin, neomethymycin, narbomycin, and pikromycin. Catalyzes the attachment of dTDP-D-desosamine onto 12- and 14-membered macrolactone rings 10-deoxymethynolide and narbonolide to produce 10-deoxymethymycin (YC-17) and narbomycin. DesVII is unique among glycosyltransferases in that it requires an additional protein component, DesVIII, for its activity. DesVII can recognize and process not only cyclic substrates of different ring size, but also a variety of linear substrates albeit with reduced, but measurable activities. Both L-sugars and D-sugars are recognized as substrates and variant substitutions at C-3 and C-4 are tolerated, but deoxygenation at C-6 is required. This chain is 10-deoxymethynolide desosaminyltransferase, found in Streptomyces venezuelae.